Reading from the N-terminus, the 515-residue chain is Cytosolic Fe-S cluster assembly factor NAR1 homolog (515 aa).

Positions 19, 65, 68, 71, 192, 247, 428, and 432 each coordinate [4Fe-4S] cluster.

This sequence belongs to the NARF family.

Its function is as follows. Component of the cytosolic Fe/S protein assembly machinery. Required for maturation of extramitochondrial Fe/S proteins. May play a role in the transfer of pre-assembled Fe/S clusters to target apoproteins. This Schizosaccharomyces japonicus (strain yFS275 / FY16936) (Fission yeast) protein is Cytosolic Fe-S cluster assembly factor NAR1 homolog.